Here is a 548-residue protein sequence, read N- to C-terminus: Glucan 1,4-alpha-maltotetraohydrolase (548 aa).

Positions 1–21 (MSHILRAAVLAAMLLPLPSMA) are cleaved as a signal peptide. 5 residues coordinate Ca(2+): D22, Q23, H34, D37, and E38. 99-100 (YF) serves as a coordination point for substrate. N137 is a binding site for Ca(2+). A substrate-binding site is contributed by H138. A disulfide bridge links C161 with C171. Ca(2+) contacts are provided by D172 and D175. 177–181 (FIGGD) contributes to the substrate binding site. D183 contacts Ca(2+). Substrate is bound at residue R212. D214 functions as the Nucleophile in the catalytic mechanism. 217 to 218 (RG) contributes to the substrate binding site. G218 serves as a coordination point for Ca(2+). The cysteines at positions 237 and 272 are disulfide-linked. E240 serves as the catalytic Proton donor. Residues H314 and Q326 each coordinate substrate. The CBM20 domain maps to 446–548 (GEPGALVSVS…SEGATTVGRL (103 aa)). Residues 529 to 542 (QGGANNSLTPSEGA) show a composition bias toward polar residues. The segment at 529–548 (QGGANNSLTPSEGATTVGRL) is disordered.

This sequence belongs to the glycosyl hydrolase 13 family. As to quaternary structure, monomer. The cofactor is Ca(2+).

The protein localises to the secreted. The enzyme catalyses Hydrolysis of (1-&gt;4)-alpha-D-glucosidic linkages in amylaceous polysaccharides, to remove successive maltotetraose residues from the non-reducing chain ends.. It functions in the pathway glycan degradation; starch degradation. This chain is Glucan 1,4-alpha-maltotetraohydrolase (amyP), found in Stutzerimonas stutzeri (Pseudomonas stutzeri).